The following is an 88-amino-acid chain: Large ribosomal subunit protein bL27 (88 aa).

Residues 1-26 (MAHKKGTGSTRNGRDSNSKRLGVKAY) are disordered.

It belongs to the bacterial ribosomal protein bL27 family.

The sequence is that of Large ribosomal subunit protein bL27 from Prochlorococcus marinus (strain MIT 9211).